Reading from the N-terminus, the 102-residue chain is Small ribosomal subunit protein uS10 (102 aa).

Belongs to the universal ribosomal protein uS10 family. In terms of assembly, part of the 30S ribosomal subunit.

Functionally, involved in the binding of tRNA to the ribosomes. The chain is Small ribosomal subunit protein uS10 from Methanothermobacter thermautotrophicus (strain ATCC 29096 / DSM 1053 / JCM 10044 / NBRC 100330 / Delta H) (Methanobacterium thermoautotrophicum).